A 190-amino-acid polypeptide reads, in one-letter code: Pyridoxal 5'-phosphate synthase subunit PdxT (190 aa).

46–48 is a binding site for L-glutamine; that stretch reads GES. Cys78 (nucleophile) is an active-site residue. L-glutamine-binding positions include Arg105 and 138–139; that span reads IR. Residues His174 and Glu176 each act as charge relay system in the active site.

It belongs to the glutaminase PdxT/SNO family. In terms of assembly, in the presence of PdxS, forms a dodecamer of heterodimers. Only shows activity in the heterodimer.

It catalyses the reaction aldehydo-D-ribose 5-phosphate + D-glyceraldehyde 3-phosphate + L-glutamine = pyridoxal 5'-phosphate + L-glutamate + phosphate + 3 H2O + H(+). The enzyme catalyses L-glutamine + H2O = L-glutamate + NH4(+). The protein operates within cofactor biosynthesis; pyridoxal 5'-phosphate biosynthesis. Functionally, catalyzes the hydrolysis of glutamine to glutamate and ammonia as part of the biosynthesis of pyridoxal 5'-phosphate. The resulting ammonia molecule is channeled to the active site of PdxS. The chain is Pyridoxal 5'-phosphate synthase subunit PdxT from Bifidobacterium longum (strain NCC 2705).